The primary structure comprises 463 residues: Methionine aminopeptidase 2-1 (463 aa).

Positions 1–98 are disordered; sequence MGSKTPEEQI…PPRVPLSDLF (98 aa). The span at 30 to 45 shows a compositional bias: basic and acidic residues; it reads RGTHLSRDGDGSLGDH. The span at 46–55 shows a compositional bias: acidic residues; the sequence is GDDDDADEDD. Residues 69–81 are compositionally biased toward basic residues; that stretch reads KKKKRPKKKKKPA. His214 is a substrate binding site. A divalent metal cation contacts are provided by Asp235, Asp246, and His315. Residue His323 coordinates substrate. Residues Glu348 and Glu444 each contribute to the a divalent metal cation site.

Belongs to the peptidase M24A family. Methionine aminopeptidase eukaryotic type 2 subfamily. Co(2+) serves as cofactor. Requires Zn(2+) as cofactor. Mn(2+) is required as a cofactor. The cofactor is Fe(2+).

The protein localises to the cytoplasm. The catalysed reaction is Release of N-terminal amino acids, preferentially methionine, from peptides and arylamides.. Its function is as follows. Cotranslationally removes the N-terminal methionine from nascent proteins. The N-terminal methionine is often cleaved when the second residue in the primary sequence is small and uncharged (Met-Ala-, Cys, Gly, Pro, Ser, Thr, or Val). The polypeptide is Methionine aminopeptidase 2-1 (Colletotrichum graminicola (strain M1.001 / M2 / FGSC 10212) (Maize anthracnose fungus)).